The sequence spans 273 residues: Dormancy associated translation inhibitor (273 aa).

As to quaternary structure, interacts with human TLR2.

In terms of biological role, involved in translation regulation. Can also stimulate macrophages and peripheral blood mononuclear cells (PBMC) to secrete important cytokines that may be significant in granuloma formation and its maintenance. Increases secretion of IFN-gamma, TNF-alpha, IL-1 beta and IL-8 through human Toll-like receptor 2 (TLR2) signaling pathway. This Mycobacterium tuberculosis (strain CDC 1551 / Oshkosh) protein is Dormancy associated translation inhibitor.